The primary structure comprises 73 residues: uncharacterized protein (73 aa).

The interval 48–73 (AKEPEKKTPSMEAKATSLSPNKASAS) is disordered. Residues 63–73 (TSLSPNKASAS) are compositionally biased toward polar residues.

This is an uncharacterized protein from Saccharomyces cerevisiae (strain ATCC 204508 / S288c) (Baker's yeast).